Here is a 233-residue protein sequence, read N- to C-terminus: Germin-like protein (233 aa).

The first 22 residues, 1–22 (MEAYKMFAFVVLLATTLYQAYA), serve as a signal peptide directing secretion. A disulfide bridge connects residues cysteine 32 and cysteine 49. One can recognise a Cupin type-1 domain in the interval 63–215 (RGLNMPANTD…RPSISMRIWS (153 aa)). Positions 111, 113, 118, and 162 each coordinate Mn(2+).

Belongs to the germin family. In terms of assembly, oligomer (believed to be a pentamer but probably hexamer). Expressed at high levels in unstressed roots.

The protein localises to the secreted. Its subcellular location is the extracellular space. It localises to the apoplast. Its function is as follows. May be involved in seed germination. The chain is Germin-like protein from Mesembryanthemum crystallinum (Common ice plant).